We begin with the raw amino-acid sequence, 368 residues long: Cobalt-precorrin-5B C(1)-methyltransferase (368 aa).

This sequence belongs to the CbiD family.

It catalyses the reaction Co-precorrin-5B + S-adenosyl-L-methionine = Co-precorrin-6A + S-adenosyl-L-homocysteine. The protein operates within cofactor biosynthesis; adenosylcobalamin biosynthesis; cob(II)yrinate a,c-diamide from sirohydrochlorin (anaerobic route): step 6/10. In terms of biological role, catalyzes the methylation of C-1 in cobalt-precorrin-5B to form cobalt-precorrin-6A. This Synechococcus sp. (strain CC9605) protein is Cobalt-precorrin-5B C(1)-methyltransferase.